The primary structure comprises 276 residues: MATYFVGDLQGCYDELQRLLEKVRFDPTQDLLYLVGDLVARGDKSLECLRLVKSLGKSAQTVLGNHDLHLLATAFGIKKVKSRDRVDAIFHAEDFEELIHWLRHQPLLVYNAKQNWVMTHAGISPDWDINTAQACAKEVENVLQQGDYCHLLSQMYDSRPDLWSADLTGIERLRYIINVFTRMRFCYRDHRLDFDCKSPVDKAPEELTPWFNLSNPLYKQVDIIFGHWASLVDTPTPHHIYALDTGCVWNNRMTMLRWEDKQYFCQPALKDYAFNG.

It belongs to the Ap4A hydrolase family.

The catalysed reaction is P(1),P(4)-bis(5'-adenosyl) tetraphosphate + H2O = 2 ADP + 2 H(+). In terms of biological role, hydrolyzes diadenosine 5',5'''-P1,P4-tetraphosphate to yield ADP. The protein is Bis(5'-nucleosyl)-tetraphosphatase, symmetrical of Mannheimia succiniciproducens (strain KCTC 0769BP / MBEL55E).